Here is a 58-residue protein sequence, read N- to C-terminus: uncharacterized protein (58 aa).

This is an uncharacterized protein from Archaeoglobus fulgidus (strain ATCC 49558 / DSM 4304 / JCM 9628 / NBRC 100126 / VC-16).